Consider the following 237-residue polypeptide: NAD-dependent protein deacetylase (237 aa).

The Deacetylase sirtuin-type domain maps to 1–237; sequence MFTTSLRQAQ…LVETNRALQK (237 aa). The NAD(+) site is built by alanine 18, threonine 22, phenylalanine 29, arginine 30, glutamine 95, aspartate 98, and histidine 113. Residue phenylalanine 29 participates in nicotinamide binding. A nicotinamide-binding site is contributed by aspartate 98. Residue histidine 113 is the Proton acceptor of the active site. Residues cysteine 121, cysteine 124, cysteine 140, and cysteine 142 each coordinate Zn(2+). 4 residues coordinate NAD(+): serine 180, serine 181, asparagine 205, and isoleucine 224.

It belongs to the sirtuin family. Class U subfamily. Requires Zn(2+) as cofactor.

The protein localises to the cytoplasm. It carries out the reaction N(6)-acetyl-L-lysyl-[protein] + NAD(+) + H2O = 2''-O-acetyl-ADP-D-ribose + nicotinamide + L-lysyl-[protein]. In terms of biological role, NAD-dependent protein deacetylase which modulates the activities of several enzymes which are inactive in their acetylated form. This Shouchella clausii (strain KSM-K16) (Alkalihalobacillus clausii) protein is NAD-dependent protein deacetylase.